The following is a 412-amino-acid chain: DnaJ homolog subfamily A member 2 (412 aa).

Residues 8–70 (KLYDILGVPP…EKRELYDRYG (63 aa)) enclose the J domain. N6-acetyllysine is present on lysine 39. Residues serine 78 and serine 123 each carry the phosphoserine modification. The segment at 130–214 (GKTTKLQLSK…CEGKKVIKEV (85 aa)) adopts a CR-type zinc-finger fold. Lysine 134 is covalently cross-linked (Glycyl lysine isopeptide (Lys-Gly) (interchain with G-Cter in SUMO2)). Cysteine 143 and cysteine 146 together coordinate Zn(2+). Residues 143–150 (CSACSGQG) form a CXXCXGXG motif repeat. Position 152 is an N6-acetyllysine (lysine 152). Zn(2+) is bound by residues cysteine 159, cysteine 162, cysteine 186, cysteine 189, cysteine 202, and cysteine 205. CXXCXGXG motif repeat units lie at residues 159–166 (CSACRGRG), 186–193 (CSDCNGEG), and 202–209 (CKKCEGKK). The disordered stretch occupies residues 359–412 (PEVPNIIGDTEEVELQEFDSTRGSGGGQRREAYNDSSDEESSSHHGPGVQCAHQ). Residue tyrosine 391 is modified to Phosphotyrosine. Phosphoserine occurs at positions 394 and 395. Cysteine methyl ester is present on cysteine 409. Residue cysteine 409 is the site of S-farnesyl cysteine attachment. Positions 410-412 (AHQ) are cleaved as a propeptide — removed in mature form.

It localises to the membrane. Its function is as follows. Co-chaperone of Hsc70. Stimulates ATP hydrolysis and the folding of unfolded proteins mediated by HSPA1A/B (in vitro). The polypeptide is DnaJ homolog subfamily A member 2 (DNAJA2) (Bos taurus (Bovine)).